A 517-amino-acid polypeptide reads, in one-letter code: Bifunctional purine biosynthesis protein PurH (517 aa).

Residues 1–146 (MKRLALLSTS…KNFAHLTVLC (146 aa)) form the MGS-like domain.

Belongs to the PurH family.

It catalyses the reaction (6R)-10-formyltetrahydrofolate + 5-amino-1-(5-phospho-beta-D-ribosyl)imidazole-4-carboxamide = 5-formamido-1-(5-phospho-D-ribosyl)imidazole-4-carboxamide + (6S)-5,6,7,8-tetrahydrofolate. The catalysed reaction is IMP + H2O = 5-formamido-1-(5-phospho-D-ribosyl)imidazole-4-carboxamide. The protein operates within purine metabolism; IMP biosynthesis via de novo pathway; 5-formamido-1-(5-phospho-D-ribosyl)imidazole-4-carboxamide from 5-amino-1-(5-phospho-D-ribosyl)imidazole-4-carboxamide (10-formyl THF route): step 1/1. It participates in purine metabolism; IMP biosynthesis via de novo pathway; IMP from 5-formamido-1-(5-phospho-D-ribosyl)imidazole-4-carboxamide: step 1/1. This is Bifunctional purine biosynthesis protein PurH from Trichodesmium erythraeum (strain IMS101).